A 503-amino-acid polypeptide reads, in one-letter code: Glutamate--tRNA ligase (503 aa).

The short motif at 14-24 is the 'HIGH' region element; sequence PSPTGSLHIGG. The short motif at 261-265 is the 'KMSKS' region element; the sequence is KLSKR. An ATP-binding site is contributed by lysine 264.

Belongs to the class-I aminoacyl-tRNA synthetase family. Glutamate--tRNA ligase type 1 subfamily. As to quaternary structure, monomer.

Its subcellular location is the cytoplasm. It catalyses the reaction tRNA(Glu) + L-glutamate + ATP = L-glutamyl-tRNA(Glu) + AMP + diphosphate. Its function is as follows. Catalyzes the attachment of glutamate to tRNA(Glu) in a two-step reaction: glutamate is first activated by ATP to form Glu-AMP and then transferred to the acceptor end of tRNA(Glu). This chain is Glutamate--tRNA ligase, found in Chloroflexus aurantiacus (strain ATCC 29366 / DSM 635 / J-10-fl).